The following is a 279-amino-acid chain: Bifunctional protein FolD (279 aa).

NADP(+) is bound by residues 158 to 160 (GRS), serine 183, and isoleucine 224.

The protein belongs to the tetrahydrofolate dehydrogenase/cyclohydrolase family. Homodimer.

It catalyses the reaction (6R)-5,10-methylene-5,6,7,8-tetrahydrofolate + NADP(+) = (6R)-5,10-methenyltetrahydrofolate + NADPH. It carries out the reaction (6R)-5,10-methenyltetrahydrofolate + H2O = (6R)-10-formyltetrahydrofolate + H(+). Its pathway is one-carbon metabolism; tetrahydrofolate interconversion. Catalyzes the oxidation of 5,10-methylenetetrahydrofolate to 5,10-methenyltetrahydrofolate and then the hydrolysis of 5,10-methenyltetrahydrofolate to 10-formyltetrahydrofolate. The polypeptide is Bifunctional protein FolD (Caldicellulosiruptor saccharolyticus (strain ATCC 43494 / DSM 8903 / Tp8T 6331)).